The following is a 368-amino-acid chain: Core histone macro-H2A.1 (368 aa).

The Histone H2A domain maps to 2–117; that stretch reads SSRGGKKKST…NIHPELLAKK (116 aa). Residues lysine 7 and lysine 9 each carry the N6-lactoyllysine; alternate modification. Lysine 18 is subject to N6-methyllysine. The residue at position 116 (lysine 116) is an N6-acetyllysine; alternate. Lysine 116 is covalently cross-linked (Glycyl lysine isopeptide (Lys-Gly) (interchain with G-Cter in ubiquitin); alternate). Residue lysine 117 forms a Glycyl lysine isopeptide (Lys-Gly) (interchain with G-Cter in ubiquitin) linkage. Lysine 123 carries the post-translational modification N6-acetyllysine; alternate. Lysine 123 is modified (N6,N6-dimethyllysine; alternate). Lysine 123 participates in a covalent cross-link: Glycyl lysine isopeptide (Lys-Gly) (interchain with G-Cter in SUMO2); alternate. Residues 128–179 form a disordered region; it reads ITPPPAKKAKSPSQKKPVAKKTGGKKGARKSKKQGEVSKAASADSTTEGAPT. Threonine 129 is modified (phosphothreonine). The segment covering 144–159 has biased composition (basic residues); the sequence is PVAKKTGGKKGARKSK. A Glycyl lysine isopeptide (Lys-Gly) (interchain with G-Cter in SUMO2) cross-link involves residue lysine 166. Residues serine 169 and serine 172 each carry the phosphoserine modification. One can recognise a Macro domain in the interval 183–366; the sequence is TVLSTKSLFL…IYVQEMAKLD (184 aa). Residue lysine 188 forms a Glycyl lysine isopeptide (Lys-Gly) (interchain with G-Cter in SUMO2) linkage. A glycoprotein-binding residues include aspartate 202, isoleucine 203, valine 225, serine 274, glycine 311, serine 312, glycine 313, and asparagine 315. A Glycyl lysine isopeptide (Lys-Gly) (interchain with G-Cter in SUMO2) cross-link involves residue lysine 319.

This sequence belongs to the histone H2A family. In terms of assembly, the nucleosome is a histone octamer containing two molecules each of H2A, H2B, H3 and H4 assembled in one H3-H4 heterotetramer and two H2A-H2B heterodimers. Interacts with HDAC1 and HDAC2. Interacts with SPOP. Part of a complex consisting of MACROH2A1, CUL3 and SPOP. As to quaternary structure, interacts with PARP1. Monoubiquitinated at either Lys-116 or Lys-117. May also be polyubiquitinated. Ubiquitination is mediated by the CUL3/SPOP E3 complex and does not promote proteasomal degradation. Instead, it is required for enrichment in inactive X chromosome chromatin. In terms of tissue distribution, present only in liver and brain (at protein level). As to expression, present in brain, thymus, testis, liver and kidney (at protein level).

The protein resides in the nucleus. Its subcellular location is the chromosome. Functionally, variant histone H2A which replaces conventional H2A in a subset of nucleosomes where it represses transcription. Nucleosomes wrap and compact DNA into chromatin, limiting DNA accessibility to the cellular machineries which require DNA as a template. Histones thereby play a central role in transcription regulation, DNA repair, DNA replication and chromosomal stability. DNA accessibility is regulated via a complex set of post-translational modifications of histones, also called histone code, and nucleosome remodeling. Involved in stable X chromosome inactivation. Inhibits the binding of transcription factors, including NF-kappa-B, and interferes with the activity of remodeling SWI/SNF complexes. Inhibits histone acetylation by EP300 and recruits class I HDACs, which induces a hypoacetylated state of chromatin. Isoform that specifically binds poly-ADP-ribose and O-acetyl-ADP-ribose and plays a key role in NAD(+) metabolism. Able to bind to the ends of poly-ADP-ribose chains created by PARP1 and cap them. This prevents PARP1 from further addition of ADP-ribose and thus limits the consumption of nuclear NAD(+), allowing the cell to maintain proper NAD(+) levels in both the nucleus and the mitochondria to promote proper mitochondrial respiration. Increases the expression of genes involved in redox metabolism, including SOD3. In terms of biological role, in contrast to isoform 1, does not bind poly-ADP-ribose. Represses SOD3 gene expression. The polypeptide is Core histone macro-H2A.1 (Rattus norvegicus (Rat)).